The following is a 221-amino-acid chain: 5-methylthioribulose-1-phosphate/5-deoxyribulose-1-phosphate aldolase (221 aa).

Catalysis depends on E75, which acts as the Proton donor/acceptor. 4 residues coordinate Co(2+): E75, H94, H96, and H157.

Belongs to the aldolase class II family. It depends on Co(2+) as a cofactor.

It carries out the reaction 5-(methylsulfanyl)-D-ribulose 1-phosphate = 2-(methylsulfanyl)acetaldehyde + dihydroxyacetone phosphate. It catalyses the reaction 5-deoxy-D-ribulose 1-phosphate = dihydroxyacetone phosphate + acetaldehyde. It participates in amino-acid biosynthesis; L-methionine biosynthesis via salvage pathway. In terms of biological role, uses 5-methylthioribulose-1-phosphate to yield 2-(methylthio)acetaldehyde and dihydroxyacetone phosphate. Can also use 5-deoxyribulose 1-phosphate to yield acetaldehyde and dihydroxyacetone phosphate. Part of a bifunctional DHAP-shunt salvage pathway for SAM by-products. This chain is 5-methylthioribulose-1-phosphate/5-deoxyribulose-1-phosphate aldolase, found in Rhodospirillum rubrum (strain ATCC 11170 / ATH 1.1.1 / DSM 467 / LMG 4362 / NCIMB 8255 / S1).